The chain runs to 576 residues: Lysine--tRNA ligase, mitochondrial (576 aa).

The N-terminal 30 residues, 1 to 30, are a transit peptide targeting the mitochondrion; that stretch reads MNVLLKRRSLTFAPRWLWCKCRSSRSRPYS.

The protein belongs to the class-II aminoacyl-tRNA synthetase family.

The protein resides in the mitochondrion matrix. The enzyme catalyses tRNA(Lys) + L-lysine + ATP = L-lysyl-tRNA(Lys) + AMP + diphosphate. Its function is as follows. Catalyzes the attachment of lysine to tRNA(Lys) in the mitochondrion. The chain is Lysine--tRNA ligase, mitochondrial (MSK1) from Saccharomyces cerevisiae (strain ATCC 204508 / S288c) (Baker's yeast).